The chain runs to 144 residues: MTRSAPAASATSRTAIGSAGAPAADARRALGARAEDAVVAHLAAQGVEIVARNARVGRLEIDVVARDGPVIAIIEVRTRGAGSYVRALDSIDARKRARVRRAGERLWRATFSRVRGVERMRFDAASVTFLPSGEATVEIIKAAF.

The protein belongs to the UPF0102 family.

The chain is UPF0102 protein sce2912 from Sorangium cellulosum (strain So ce56) (Polyangium cellulosum (strain So ce56)).